We begin with the raw amino-acid sequence, 402 residues long: Phosphoglycerate kinase (402 aa).

Substrate contacts are provided by residues 24-26 (DFN), Arg-40, 63-66 (HFGR), Arg-122, and Arg-155. Residues Lys-206, Gly-297, Glu-328, and 357–360 (GGDS) each bind ATP.

It belongs to the phosphoglycerate kinase family. Monomer.

Its subcellular location is the cytoplasm. It carries out the reaction (2R)-3-phosphoglycerate + ATP = (2R)-3-phospho-glyceroyl phosphate + ADP. The protein operates within carbohydrate degradation; glycolysis; pyruvate from D-glyceraldehyde 3-phosphate: step 2/5. This chain is Phosphoglycerate kinase, found in Parasynechococcus marenigrum (strain WH8102).